A 126-amino-acid chain; its full sequence is Arginine decarboxylase proenzyme (126 aa).

Serine 74 acts as the Schiff-base intermediate with substrate; via pyruvic acid in catalysis. At serine 74 the chain carries Pyruvic acid (Ser); by autocatalysis. Catalysis depends on histidine 79, which acts as the Proton acceptor; for processing activity. Cysteine 94 functions as the Proton donor; for catalytic activity in the catalytic mechanism.

It belongs to the prokaryotic AdoMetDC family. Type 1 subfamily. Heterooctamer of four alpha and four beta chains arranged as a tetramer of alpha/beta heterodimers. The cofactor is pyruvate. Is synthesized initially as an inactive proenzyme. Formation of the active enzyme involves a self-maturation process in which the active site pyruvoyl group is generated from an internal serine residue via an autocatalytic post-translational modification. Two non-identical subunits are generated from the proenzyme in this reaction, and the pyruvate is formed at the N-terminus of the alpha chain, which is derived from the carboxyl end of the proenzyme. The post-translation cleavage follows an unusual pathway, termed non-hydrolytic serinolysis, in which the side chain hydroxyl group of the serine supplies its oxygen atom to form the C-terminus of the beta chain, while the remainder of the serine residue undergoes an oxidative deamination to produce ammonia and the pyruvoyl group blocking the N-terminus of the alpha chain.

It catalyses the reaction L-arginine + H(+) = agmatine + CO2. Its pathway is amine and polyamine biosynthesis; agmatine biosynthesis; agmatine from L-arginine: step 1/1. Functionally, specifically catalyzes the decarboxylation of L-arginine to agmatine. Has no S-adenosylmethionine decarboxylase (AdoMetDC) activity. This is Arginine decarboxylase proenzyme from Pyrobaculum aerophilum (strain ATCC 51768 / DSM 7523 / JCM 9630 / CIP 104966 / NBRC 100827 / IM2).